The chain runs to 145 residues: Small ribosomal subunit protein uS17c (145 aa).

A chloroplast-targeting transit peptide spans 1–36 (MLLTTPFVSSPVRVQGNGGSGASPWAGAATALRIQA). The tract at residues 101–145 (KTKHFLAVPLPPRDTRRKSQLLPPLQSQSQSQDQDQPPTPPPSSD) is disordered. The segment covering 120–136 (QLLPPLQSQSQSQDQDQ) has biased composition (low complexity).

Belongs to the universal ribosomal protein uS17 family. In terms of assembly, part of the 30S ribosomal subunit.

Its subcellular location is the plastid. The protein resides in the chloroplast. In terms of biological role, one of the primary rRNA binding proteins, it binds specifically to the 5'-end of 16S ribosomal RNA. The chain is Small ribosomal subunit protein uS17c (RPS17) from Oryza sativa subsp. japonica (Rice).